The chain runs to 101 residues: NADH-quinone oxidoreductase subunit K (101 aa).

The next 3 helical transmembrane spans lie at 5-25 (LTHYVVASGILFAIGLAGIIL), 30-50 (IVILMCLEIMLNAANLALVAF), and 61-81 (VLVFFVITVAAAEVAVGLALI).

It belongs to the complex I subunit 4L family. In terms of assembly, NDH-1 is composed of 14 different subunits. Subunits NuoA, H, J, K, L, M, N constitute the membrane sector of the complex.

It localises to the cell inner membrane. The catalysed reaction is a quinone + NADH + 5 H(+)(in) = a quinol + NAD(+) + 4 H(+)(out). NDH-1 shuttles electrons from NADH, via FMN and iron-sulfur (Fe-S) centers, to quinones in the respiratory chain. The immediate electron acceptor for the enzyme in this species is believed to be ubiquinone. Couples the redox reaction to proton translocation (for every two electrons transferred, four hydrogen ions are translocated across the cytoplasmic membrane), and thus conserves the redox energy in a proton gradient. This Methylacidiphilum infernorum (isolate V4) (Methylokorus infernorum (strain V4)) protein is NADH-quinone oxidoreductase subunit K.